Consider the following 89-residue polypeptide: Large ribosomal subunit protein bL27 (89 aa).

Positions 1 to 24 (MAHKKAGGSSRNGRDSAGRRLGVK) are disordered.

This sequence belongs to the bacterial ribosomal protein bL27 family.

This Maricaulis maris (strain MCS10) (Caulobacter maris) protein is Large ribosomal subunit protein bL27.